Reading from the N-terminus, the 230-residue chain is Urease accessory protein UreF (230 aa).

This sequence belongs to the UreF family. As to quaternary structure, ureD, UreF and UreG form a complex that acts as a GTP-hydrolysis-dependent molecular chaperone, activating the urease apoprotein by helping to assemble the nickel containing metallocenter of UreC. The UreE protein probably delivers the nickel.

It is found in the cytoplasm. Functionally, required for maturation of urease via the functional incorporation of the urease nickel metallocenter. In Chromohalobacter salexigens (strain ATCC BAA-138 / DSM 3043 / CIP 106854 / NCIMB 13768 / 1H11), this protein is Urease accessory protein UreF.